Reading from the N-terminus, the 304-residue chain is Energy-coupling factor transporter ATP-binding protein EcfA2 (304 aa).

The region spanning 3–261 is the ABC transporter domain; sequence IIVKNISYIY…EKFLVENKLK (259 aa). ATP is bound at residue 40–47; it reads GSTGSGKT.

It belongs to the ABC transporter superfamily. Energy-coupling factor EcfA family. As to quaternary structure, forms a stable energy-coupling factor (ECF) transporter complex composed of 2 membrane-embedded substrate-binding proteins (S component), 2 ATP-binding proteins (A component) and 2 transmembrane proteins (T component).

The protein localises to the cell membrane. Its function is as follows. ATP-binding (A) component of a common energy-coupling factor (ECF) ABC-transporter complex. Unlike classic ABC transporters this ECF transporter provides the energy necessary to transport a number of different substrates. This chain is Energy-coupling factor transporter ATP-binding protein EcfA2, found in Mycoplasmopsis pulmonis (strain UAB CTIP) (Mycoplasma pulmonis).